The sequence spans 234 residues: 2,3-bisphosphoglycerate-dependent phosphoglycerate mutase (234 aa).

Substrate contacts are provided by residues 8-15 (RHGESVWN), 21-22 (TG), Arg-60, 87-90 (ERHY), Lys-98, 114-115 (RR), and 183-184 (GN). The active-site Tele-phosphohistidine intermediate is His-9. The active-site Proton donor/acceptor is Glu-87.

It belongs to the phosphoglycerate mutase family. BPG-dependent PGAM subfamily. As to quaternary structure, homodimer.

The enzyme catalyses (2R)-2-phosphoglycerate = (2R)-3-phosphoglycerate. It participates in carbohydrate degradation; glycolysis; pyruvate from D-glyceraldehyde 3-phosphate: step 3/5. In terms of biological role, catalyzes the interconversion of 2-phosphoglycerate and 3-phosphoglycerate. This is 2,3-bisphosphoglycerate-dependent phosphoglycerate mutase from Geobacter sp. (strain M21).